The following is an 82-amino-acid chain: M-zodatoxin-Lt3b (82 aa).

The signal sequence occupies residues 1 to 22; it reads MKTYAVLLALVVAFVCIAESTG. The propeptide occupies 23–61; sequence YPVEDLEDDELTELEAEALLEDLLEDLELEDLDYNEEAR. The short motif at 58-61 is the Processing quadruplet motif element; that stretch reads EEAR. A81 carries the post-translational modification Alanine amide.

Post-translationally, cleavage of the propeptide depends on the processing quadruplet motif (XXXR, with at least one of X being E). Expressed by the venom gland.

It localises to the secreted. Its function is as follows. It has antimicrobial activity against Gram-positive bacteria (A.globiformis VKM Ac-1112 (MIC=0.7 uM), and B.subtilis VKM B-501 (MIC=2.9 uM)), Gram-negative bacteria (E.coli DH5-alpha (MIC=23 uM), E.coli MH1 (MIC=28 uM), and P.aeruginosa PAO1 (MIC&gt;45 uM)), and yeasts (P.pastoris GS115 (MIC=23 uM), and S.cerevisiae Y190 (MIC=23 uM)). Does not have hemolytic against rabbit erythrocytes. Causes paralysis, but is not lethal when injected into insect (M.domestica) larvae. The protein is M-zodatoxin-Lt3b of Lachesana tarabaevi (Spider).